The primary structure comprises 81 residues: Sulfur carrier protein TusA (81 aa).

Cys20 (cysteine persulfide intermediate) is an active-site residue.

Belongs to the sulfur carrier protein TusA family.

It localises to the cytoplasm. Functionally, sulfur carrier protein which probably makes part of a sulfur-relay system. This chain is Sulfur carrier protein TusA, found in Colwellia psychrerythraea (strain 34H / ATCC BAA-681) (Vibrio psychroerythus).